Consider the following 371-residue polypeptide: Probable beta-1,4-xylosyltransferase GT43A (371 aa).

Residues 1–19 lie on the Cytoplasmic side of the membrane; it reads MGTAAVAAAERPKQRRSSH. Residues 20–42 form a helical; Signal-anchor for type II membrane protein membrane-spanning segment; the sequence is LWKKALLHFSLCFVMGFFTGFAP. Residues 43–371 lie on the Lumenal side of the membrane; it reads SSSSSWRAGS…TSTPKTHNRR (329 aa). 2 N-linked (GlcNAc...) asparagine glycosylation sites follow: asparagine 176 and asparagine 299.

The protein belongs to the glycosyltransferase 43 family.

The protein localises to the golgi apparatus membrane. In terms of biological role, probable beta-1,4-xylosyltransferase involved in xylan biosynthesis in cell walls. In Oryza sativa subsp. japonica (Rice), this protein is Probable beta-1,4-xylosyltransferase GT43A.